Reading from the N-terminus, the 261-residue chain is Kallikrein 1-related peptidase b3 (261 aa).

A signal peptide spans Met1 to Ala18. Residues Pro19–Arg24 constitute a propeptide, activation peptide. The segment at Ile25 to Arg107 is segment B1. Residues Ile25–Ala258 form the Peptidase S1 domain. 5 cysteine pairs are disulfide-bonded: Cys31–Cys173, Cys50–Cys66, Cys152–Cys219, Cys184–Cys198, and Cys209–Cys234. His65 (charge relay system) is an active-site residue. The N-linked (GlcNAc...) asparagine glycan is linked to Asn102. Positions Phe112–Lys164 are segment C. The tract at residues Phe112–Pro261 is segment A. Asp120 functions as the Charge relay system in the catalytic mechanism. The segment at Phe165 to Pro261 is segment B2. Ser213 (charge relay system) is an active-site residue. Residues His231 and Glu236 each contribute to the Zn(2+) site.

The protein belongs to the peptidase S1 family. Kallikrein subfamily. In terms of assembly, 7S nerve growth factor is composed of two alpha chains, a beta dimer composed of identical chains, and two gamma chains. It depends on Zn(2+) as a cofactor.

It catalyses the reaction Preferential cleavage of Arg-|-Xaa bonds in small molecule substrates. Highly selective action to release kallidin (lysyl-bradykinin) from kininogen involves hydrolysis of Met-|-Xaa or Leu-|-Xaa.. In terms of biological role, 7S NGF alpha chain stabilizes the 7S complex. The beta dimer promotes neurite growth. The gamma chain is an arginine-specific protease; it may also have plasminogen activator activity, as well as mitogenic activity for chick embryo fibroblasts. The protein is Kallikrein 1-related peptidase b3 (Klk1b3) of Mus musculus (Mouse).